We begin with the raw amino-acid sequence, 551 residues long: uncharacterized protein (551 aa).

Residues 1–7 are Cytoplasmic-facing; that stretch reads MKKNSSV. Residues 8 to 28 form a helical membrane-spanning segment; it reads VFFLVGLSQFVTMAFLIIGSI. Residues 29–88 are Vacuolar-facing; that stretch reads TAPIFKQIGYSKYDEITYGTFGYCKEGSCSKASYNYHPDELSDSDSNWKLNSNARSILGK. A helical transmembrane segment spans residues 89-109; sequence IIFITPIAAGLNFLGFLCTIM. Residues 110 to 135 are Cytoplasmic-facing; it reads SVLLINVLSSDRVGSASAIMFFVNLT. The helical transmembrane segment at 136–156 threads the bilayer; the sequence is FSTLGFLSASLICIVVFLLFY. Residues 157 to 160 are Vacuolar-facing; sequence PHVT. A helical membrane pass occupies residues 161–181; that stretch reads WCSWVLIPGAALSLLVIPLIF. Residues 182–551 lie on the Cytoplasmic side of the membrane; that stretch reads SAYSRSSGSR…TSLNNPYGFR (370 aa). 2 positions are modified to phosphoserine: Ser224 and Ser232. The segment at 280 to 341 is disordered; sequence AKDMENSNGS…NGSNTSNNIN (62 aa). The segment covering 307-320 has biased composition (polar residues); it reads TSTYSVIESESGLK. A compositionally biased stretch (low complexity) spans 321–341; sequence NGSVSNNYVRNNGSNTSNNIN. Ser363 carries the phosphoserine modification.

In terms of assembly, forms homo dimers or homooligomers in MCC microdomains. Interacts with BOI2 and RHO3, two key regulators of secretion.

It localises to the vacuole membrane. The protein localises to the cell membrane. Protein involved in secretion and cell wall organization. Contributes to cell surface-related functions as a auxiliary component of MCC/eisosome that specifically interacts with the secretory pathway. This is an uncharacterized protein from Saccharomyces cerevisiae (strain ATCC 204508 / S288c) (Baker's yeast).